A 209-amino-acid chain; its full sequence is Small ribosomal subunit protein uS3 (209 aa).

In terms of domain architecture, KH type-2 spans 17–86 (IDEFLEKELR…NPQIEVEEIK (70 aa)).

It belongs to the universal ribosomal protein uS3 family. Part of the 30S ribosomal subunit.

Binds the lower part of the 30S subunit head. The sequence is that of Small ribosomal subunit protein uS3 from Thermococcus kodakarensis (strain ATCC BAA-918 / JCM 12380 / KOD1) (Pyrococcus kodakaraensis (strain KOD1)).